We begin with the raw amino-acid sequence, 343 residues long: Anthranilate phosphoribosyltransferase (343 aa).

5-phospho-alpha-D-ribose 1-diphosphate contacts are provided by residues Gly-85, 88 to 89 (GD), Thr-93, 95 to 98 (NIST), 113 to 121 (KHGGRSVSS), and Ala-125. Gly-85 is an anthranilate binding site. Mg(2+) is bound at residue Ser-97. Arg-171 contacts anthranilate. Asp-230 and Glu-231 together coordinate Mg(2+).

Belongs to the anthranilate phosphoribosyltransferase family. As to quaternary structure, homodimer. Mg(2+) serves as cofactor.

The enzyme catalyses N-(5-phospho-beta-D-ribosyl)anthranilate + diphosphate = 5-phospho-alpha-D-ribose 1-diphosphate + anthranilate. Its pathway is amino-acid biosynthesis; L-tryptophan biosynthesis; L-tryptophan from chorismate: step 2/5. Its function is as follows. Catalyzes the transfer of the phosphoribosyl group of 5-phosphorylribose-1-pyrophosphate (PRPP) to anthranilate to yield N-(5'-phosphoribosyl)-anthranilate (PRA). In Aromatoleum aromaticum (strain DSM 19018 / LMG 30748 / EbN1) (Azoarcus sp. (strain EbN1)), this protein is Anthranilate phosphoribosyltransferase.